A 364-amino-acid chain; its full sequence is MQERHTEQDYRALLIADTPIIDVRAPIEFEQGAMPAAINLPLMNNDERAAVGTCYKQQGSDAALALGHKLVAGEIRQQRMDAWRAACLQNPQGILCCARGGQRSHIVQSWLHAAGIDYPLVEGGYKALRQTAIQATIELAQKPIVLIGGCTGSGKTLLVQQQPNGVDLEGLARHRGSAFGRTLQPQLSQASFENLLAAEMLKTDARQNLRLWVLEDESRMIGSNHLPECLRERMTQAAIAVVEDPFEIRLERLNEEYFLRMHHDFTHAYGDEQGWQEYCEYLHHGLSAIKRRLGLQRYNELAARLDAALTTQLTTGSTDGHLAWLVPLLEEYYDPMYRYQLEKKAEKVVFRGEWAEVAEWVKAR.

The region spanning Leu-14–Ile-137 is the Rhodanese domain. Residue Cys-97 is the S-selanylcysteine intermediate of the active site.

This sequence belongs to the SelU family. Monomer.

It catalyses the reaction 5-methylaminomethyl-2-thiouridine(34) in tRNA + selenophosphate + (2E)-geranyl diphosphate + H2O + H(+) = 5-methylaminomethyl-2-selenouridine(34) in tRNA + (2E)-thiogeraniol + phosphate + diphosphate. It carries out the reaction 5-methylaminomethyl-2-thiouridine(34) in tRNA + (2E)-geranyl diphosphate = 5-methylaminomethyl-S-(2E)-geranyl-thiouridine(34) in tRNA + diphosphate. The catalysed reaction is 5-methylaminomethyl-S-(2E)-geranyl-thiouridine(34) in tRNA + selenophosphate + H(+) = 5-methylaminomethyl-2-(Se-phospho)selenouridine(34) in tRNA + (2E)-thiogeraniol. The enzyme catalyses 5-methylaminomethyl-2-(Se-phospho)selenouridine(34) in tRNA + H2O = 5-methylaminomethyl-2-selenouridine(34) in tRNA + phosphate. Involved in the post-transcriptional modification of the uridine at the wobble position (U34) of tRNA(Lys), tRNA(Glu) and tRNA(Gln). Catalyzes the conversion of 2-thiouridine (S2U-RNA) to 2-selenouridine (Se2U-RNA). Acts in a two-step process involving geranylation of 2-thiouridine (S2U) to S-geranyl-2-thiouridine (geS2U) and subsequent selenation of the latter derivative to 2-selenouridine (Se2U) in the tRNA chain. In Shigella dysenteriae serotype 1 (strain Sd197), this protein is tRNA 2-selenouridine synthase.